Here is a 117-residue protein sequence, read N- to C-terminus: Replication initiation control protein YabA (117 aa).

His-87, Cys-89, Cys-103, and Cys-106 together coordinate Zn(2+).

The protein belongs to the YabA family. As to quaternary structure, homotetramer. Interacts with both DnaA and DnaN, acting as a bridge between these two proteins. Zn(2+) serves as cofactor.

It is found in the cytoplasm. Its subcellular location is the nucleoid. Its function is as follows. Involved in control of chromosome replication initiation. Inhibits the cooperative binding of DnaA to the oriC region, thus negatively regulating initiation of chromosome replication. Inhibits the ability of DnaA-ATP to form a helix on DNA; does not disassemble preformed DnaA-DNA helices. Decreases the residence time of DnaA on the chromosome at its binding sites (oriC, replication forks and promoter-binding sites). Tethers DnaA to the replication machinery via the DNA polymerase beta sliding clamp subunit (dnaN). Associates with oriC and other DnaA targets on the chromosome in a DnaA-dependent manner. The polypeptide is Replication initiation control protein YabA (Latilactobacillus sakei subsp. sakei (strain 23K) (Lactobacillus sakei subsp. sakei)).